Reading from the N-terminus, the 1238-residue chain is DNA-directed RNA polymerase subunit beta (1238 aa).

The protein belongs to the RNA polymerase beta chain family. The RNAP catalytic core consists of 2 alpha, 1 beta, 1 beta' and 1 omega subunit. When a sigma factor is associated with the core the holoenzyme is formed, which can initiate transcription.

The catalysed reaction is RNA(n) + a ribonucleoside 5'-triphosphate = RNA(n+1) + diphosphate. In terms of biological role, DNA-dependent RNA polymerase catalyzes the transcription of DNA into RNA using the four ribonucleoside triphosphates as substrates. The protein is DNA-directed RNA polymerase subunit beta of Clostridioides difficile (strain 630) (Peptoclostridium difficile).